The primary structure comprises 308 residues: Aspartate carbamoyltransferase catalytic subunit (308 aa).

Carbamoyl phosphate-binding residues include Arg-51 and Thr-52. Position 79 (Lys-79) interacts with L-aspartate. Carbamoyl phosphate contacts are provided by Arg-101, His-130, and Gln-133. Positions 163 and 215 each coordinate L-aspartate. Carbamoyl phosphate-binding residues include Ala-258 and Pro-259.

This sequence belongs to the aspartate/ornithine carbamoyltransferase superfamily. ATCase family. Heterododecamer (2C3:3R2) of six catalytic PyrB chains organized as two trimers (C3), and six regulatory PyrI chains organized as three dimers (R2).

It catalyses the reaction carbamoyl phosphate + L-aspartate = N-carbamoyl-L-aspartate + phosphate + H(+). The protein operates within pyrimidine metabolism; UMP biosynthesis via de novo pathway; (S)-dihydroorotate from bicarbonate: step 2/3. Its function is as follows. Catalyzes the condensation of carbamoyl phosphate and aspartate to form carbamoyl aspartate and inorganic phosphate, the committed step in the de novo pyrimidine nucleotide biosynthesis pathway. The sequence is that of Aspartate carbamoyltransferase catalytic subunit from Pediococcus pentosaceus (strain ATCC 25745 / CCUG 21536 / LMG 10740 / 183-1w).